Here is a 2920-residue protein sequence, read N- to C-terminus: Cadherin-related hmr-1 (2920 aa).

An N-terminal signal peptide occupies residues 1–19 (MSWNILLILLISNLDEVLA). Residues 20–2779 (KTLLKLPSNA…AVSKLGISSP (2760 aa)) are Extracellular-facing. 5 N-linked (GlcNAc...) asparagine glycosylation sites follow: Asn72, Asn243, Asn253, Asn339, and Asn508. Cadherin domains lie at 322–422 (SSRS…PPSF), 425–530 (SPLP…PPQF), 531–642 (AKQE…VPTF), 643–747 (TRPL…SAVF), 749–865 (PTSQ…KPEF), 871–979 (YSDI…SPQF), 980–1093 (ERPS…APKW), 1097–1211 (PDCK…VPQF), 1212–1335 (TVDL…APSF), 1336–1436 (EEQK…APQF), 1438–1546 (QQKY…SPIF), 1548–1661 (ERLF…APFF), 1662–1772 (EKTR…APHI), and 1772–1874 (IHGA…EPYT). Asn658, Asn685, Asn715, and Asn826 each carry an N-linked (GlcNAc...) asparagine glycan. N-linked (GlcNAc...) asparagine glycosylation is present at Asn1177. Asn1417 carries N-linked (GlcNAc...) asparagine glycosylation. An N-linked (GlcNAc...) asparagine glycan is attached at Asn1646. N-linked (GlcNAc...) asparagine glycosylation is found at Asn1935, Asn2224, and Asn2232. In terms of domain architecture, EGF-like 1 spans 2246 to 2283 (APPACQHSLCHNDGVCHNTNPGFFCECRNDGLKGARCQ). 3 cysteine pairs are disulfide-bonded: Cys2250-Cys2261, Cys2255-Cys2270, and Cys2272-Cys2282. The 195-residue stretch at 2284-2478 (GTTRSFGGNG…AFEQNSEKGC (195 aa)) folds into the Laminin G-like domain. Asn2307 and Asn2332 each carry an N-linked (GlcNAc...) asparagine glycan. 3 disulfides stabilise this stretch: Cys2452–Cys2478, Cys2501–Cys2515, and Cys2517–Cys2526. Residues 2492-2527 (SLNHCIHGDCFADVQGSGAMVAKCVCDPGWGGARCE) form the EGF-like 2 domain. The N-linked (GlcNAc...) asparagine glycan is linked to Asn2623. A helical membrane pass occupies residues 2780 to 2800 (AIILILVSLALLILLVMMMVV). Residues 2801 to 2920 (YTRRSPGAFE…VTLESIESAQ (120 aa)) lie on the Cytoplasmic side of the membrane. At Ser2839 the chain carries Phosphoserine. Positions 2858 to 2891 (IGGHPPHYPPRGMAPPKDDHELNSKIKDLETDQN) are disordered. A compositionally biased stretch (basic and acidic residues) spans 2873 to 2887 (PKDDHELNSKIKDLE). At Ser2909 the chain carries Phosphoserine. Thr2912 carries the post-translational modification Phosphothreonine. 2 positions are modified to phosphoserine: Ser2915 and Ser2918.

Monomer in solution. Isoform a is a component of a core catenin-cadherin complex consisting of hmr-1, hmp-1 and hmp-2; the complex localizes to adherens junctions. Isoform a interacts with hmp-2; the interaction is direct. Isoform a interacts (via intracellular domain) with jac-1. Post-translationally, phosphorylation at T-2912 increases the binding affinity for hmp-2. Sumoylated. Sumoylation prevents accumulation at adherens junctions and decreases the binding affinity for hmp-2. Expressed in epidermal cells (at protein level). As to expression, neuron-specific.

Its subcellular location is the cell membrane. It is found in the cell junction. The protein resides in the adherens junction. The protein localises to the cell projection. It localises to the dendrite. Its function is as follows. Cadherins are calcium-dependent cell adhesion proteins. They preferentially interact with themselves in a homophilic manner in connecting cells; cadherins may thus contribute to the sorting of heterogeneous cell types. Required for adherens junction assembly and connecting adherens junctions to the cytoskeleton. In terms of biological role, isoform a is required for cell migration during body enclosure and cell shape changes during body elongation. Required for proper localization of other junctional components, such as hmp-1, hmp-2, jac-1 and pac-1. Recruitment of pac-1 is required to establish cell polarity, independent of its role in cell adhesion. Required for primodial germ cell ingression and adherence to endodermal cells during gastrulation. Functionally, isoform b is involved in axonal guidance in a subset of motor neurons. The protein is Cadherin-related hmr-1 of Caenorhabditis elegans.